The sequence spans 228 residues: Small ribosomal subunit protein uS3 (228 aa).

The region spanning 39-107 is the KH type-2 domain; sequence TREYLQDKLK…PVHINIEEIR (69 aa).

This sequence belongs to the universal ribosomal protein uS3 family. Part of the 30S ribosomal subunit. Forms a tight complex with proteins S10 and S14.

Its function is as follows. Binds the lower part of the 30S subunit head. Binds mRNA in the 70S ribosome, positioning it for translation. The sequence is that of Small ribosomal subunit protein uS3 from Pseudomonas putida (strain ATCC 700007 / DSM 6899 / JCM 31910 / BCRC 17059 / LMG 24140 / F1).